Here is a 341-residue protein sequence, read N- to C-terminus: Pyrophosphate--fructose 6-phosphate 1-phosphotransferase (341 aa).

G10 is a diphosphate binding site. E103 provides a ligand contact to Mg(2+). Substrate-binding positions include 125–127 (TID), R162, 169–171 (MGR), E221, R265, and 271–274 (HTQR). D127 acts as the Proton acceptor in catalysis.

Belongs to the phosphofructokinase type A (PFKA) family. Mixed-substrate PFK group III subfamily. In terms of assembly, homotetramer. Mg(2+) is required as a cofactor.

It is found in the cytoplasm. The catalysed reaction is beta-D-fructose 6-phosphate + diphosphate = beta-D-fructose 1,6-bisphosphate + phosphate + H(+). The protein operates within carbohydrate degradation; glycolysis; D-glyceraldehyde 3-phosphate and glycerone phosphate from D-glucose: step 3/4. Its activity is regulated as follows. Non-allosteric. In terms of biological role, catalyzes the phosphorylation of D-fructose 6-phosphate, the first committing step of glycolysis. Uses inorganic phosphate (PPi) as phosphoryl donor instead of ATP like common ATP-dependent phosphofructokinases (ATP-PFKs), which renders the reaction reversible, and can thus function both in glycolysis and gluconeogenesis. Consistently, PPi-PFK can replace the enzymes of both the forward (ATP-PFK) and reverse (fructose-bisphosphatase (FBPase)) reactions. In Amycolatopsis methanolica, this protein is Pyrophosphate--fructose 6-phosphate 1-phosphotransferase.